Consider the following 182-residue polypeptide: ATP synthase subunit delta (182 aa).

Belongs to the ATPase delta chain family. F-type ATPases have 2 components, F(1) - the catalytic core - and F(0) - the membrane proton channel. F(1) has five subunits: alpha(3), beta(3), gamma(1), delta(1), epsilon(1). CF(0) has four main subunits: a(1), b(1), b'(1) and c(10-14). The alpha and beta chains form an alternating ring which encloses part of the gamma chain. F(1) is attached to F(0) by a central stalk formed by the gamma and epsilon chains, while a peripheral stalk is formed by the delta, b and b' chains.

It is found in the cellular thylakoid membrane. Functionally, f(1)F(0) ATP synthase produces ATP from ADP in the presence of a proton or sodium gradient. F-type ATPases consist of two structural domains, F(1) containing the extramembraneous catalytic core and F(0) containing the membrane proton channel, linked together by a central stalk and a peripheral stalk. During catalysis, ATP synthesis in the catalytic domain of F(1) is coupled via a rotary mechanism of the central stalk subunits to proton translocation. This protein is part of the stalk that links CF(0) to CF(1). It either transmits conformational changes from CF(0) to CF(1) or is implicated in proton conduction. In Synechococcus sp. (strain CC9605), this protein is ATP synthase subunit delta.